We begin with the raw amino-acid sequence, 699 residues long: Elongation factor G (699 aa).

Residues 8–283 (EHIRNIGICA…AIVDFLPSPI (276 aa)) form the tr-type G domain. GTP contacts are provided by residues 17-24 (AHIDAGKT), 81-85 (DTPGH), and 135-138 (NKMD).

It belongs to the TRAFAC class translation factor GTPase superfamily. Classic translation factor GTPase family. EF-G/EF-2 subfamily.

Its subcellular location is the cytoplasm. Functionally, catalyzes the GTP-dependent ribosomal translocation step during translation elongation. During this step, the ribosome changes from the pre-translocational (PRE) to the post-translocational (POST) state as the newly formed A-site-bound peptidyl-tRNA and P-site-bound deacylated tRNA move to the P and E sites, respectively. Catalyzes the coordinated movement of the two tRNA molecules, the mRNA and conformational changes in the ribosome. The polypeptide is Elongation factor G (Rickettsia typhi (strain ATCC VR-144 / Wilmington)).